A 148-amino-acid chain; its full sequence is Single-stranded DNA-binding protein, mitochondrial (148 aa).

The transit peptide at 1-16 directs the protein to the mitochondrion; sequence MFRRPVLQVLRQFVRH. An SSB domain is found at 30 to 141; the sequence is LNRVHLLGRV…IIADNIIFLS (112 aa). Ser-67 and Ser-79 each carry phosphoserine. Lys-113 carries the N6-acetyllysine modification. Lys-122 is subject to N6-succinyllysine.

Homotetramer. Interacts with MPG/AAG, through inhibition of its glycosylase activity it potentially prevents formation of DNA breaks in ssDNA, ensuring that base removal primarily occurs in dsDNA. Interacts with POLDIP2. Interacts with PRIMPOL.

It is found in the mitochondrion. The protein localises to the mitochondrion matrix. It localises to the mitochondrion nucleoid. Its function is as follows. Binds preferentially and cooperatively to pyrimidine rich single-stranded DNA (ss-DNA). In vitro, required to maintain the copy number of mitochondrial DNA (mtDNA) and plays a crucial role during mtDNA replication by stimulating the activity of the replisome components POLG and TWNK at the replication fork. Promotes the activity of the gamma complex polymerase POLG, largely by organizing the template DNA and eliminating secondary structures to favor ss-DNA conformations that facilitate POLG activity. In addition it is able to promote the 5'-3' unwinding activity of the mtDNA helicase TWNK. May also function in mtDNA repair. This Pongo abelii (Sumatran orangutan) protein is Single-stranded DNA-binding protein, mitochondrial (SSBP1).